Consider the following 106-residue polypeptide: ATP-dependent Clp protease adapter protein ClpS (106 aa).

Belongs to the ClpS family. Binds to the N-terminal domain of the chaperone ClpA.

Functionally, involved in the modulation of the specificity of the ClpAP-mediated ATP-dependent protein degradation. The sequence is that of ATP-dependent Clp protease adapter protein ClpS from Vibrio vulnificus (strain CMCP6).